The sequence spans 547 residues: Sesquiterpene synthase TPS3 (547 aa).

Positions 265, 302, 306, 443, and 446 each coordinate (2E,6E)-farnesyl diphosphate. Mg(2+)-binding residues include Asp-302 and Asp-306. Residues 302–306 carry the DDXXD motif motif; that stretch reads DDIYD. Asp-446, Thr-450, and Glu-454 together coordinate Mg(2+).

The protein belongs to the terpene synthase family. Tpsb subfamily. As to quaternary structure, monomer. The cofactor is Mg(2+).

The protein resides in the cytoplasm. It catalyses the reaction (2E,6E)-farnesyl diphosphate = (1S,5S,6R)-alpha-bergamotene + diphosphate. It participates in secondary metabolite biosynthesis; terpenoid biosynthesis. Functionally, sesquiterpene synthase involved in the biosynthesis of volatile organic compounds. Mediates the conversion of (2E,6E)-farnesyl diphosphate (FPP) into alpha-bergamotene. Does not use (2E)-geranyl diphosphate (GPP) as substrate. The chain is Sesquiterpene synthase TPS3 from Cananga odorata (Ylang-ylang tree).